The sequence spans 512 residues: Plastidal glycolate/glycerate translocator 1, chloroplastic (512 aa).

The N-terminal 76 residues, 1-76, are a transit peptide targeting the chloroplast; sequence MATLLATPIF…MNFERKLSVQ (76 aa). Alanine 77 carries the post-translational modification N-acetylalanine. 12 helical membrane passes run 93 to 113, 127 to 147, 160 to 180, 195 to 215, 238 to 258, 270 to 290, 293 to 313, 336 to 356, 367 to 387, 398 to 418, 425 to 445, and 480 to 500; these read VIAI…DYFL, ALFG…VVPA, FLFI…VLPL, YIVA…AIAV, LELW…LFYP, PFLL…PSSI, VFHP…AFGY, AGDI…FSMF, AEIF…TALV, TVSI…VSLF, LTAA…QVVL, and LPFC…LCSV.

This sequence belongs to the CidB/LrgB family. In terms of tissue distribution, expressed in leaves, stems and flowers, but not in roots.

It localises to the plastid. Its subcellular location is the chloroplast membrane. Glycolate/glycerate transporter required for photorespiration. This chain is Plastidal glycolate/glycerate translocator 1, chloroplastic (PLGG1), found in Arabidopsis thaliana (Mouse-ear cress).